Consider the following 851-residue polypeptide: DNA mismatch repair protein MutS (851 aa).

ATP is bound at residue 614–621; that stretch reads GPNMGGKS.

It belongs to the DNA mismatch repair MutS family.

Functionally, this protein is involved in the repair of mismatches in DNA. It is possible that it carries out the mismatch recognition step. This protein has a weak ATPase activity. The protein is DNA mismatch repair protein MutS of Serratia proteamaculans (strain 568).